We begin with the raw amino-acid sequence, 452 residues long: Keratin, type I cytoskeletal 42 (452 aa).

The head stretch occupies residues 4 to 93 (TTSIRQFSTS…GVSDALLGGS (90 aa)). Coiled-coil stretches lie at residues 93-132 (SEKE…WYKK) and 188-407 (NLRM…HLAT). Positions 94–129 (EKETMQNLNDRLATYLDRVRALEEANTDLEVKIREW) are coil 1A. Positions 94–405 (EKETMQNLND…RLLEGEDAHL (312 aa)) constitute an IF rod domain. Residues 130–147 (YKKQGPGPARDYSPYFKT) are linker 1. A coil 1B region spans residues 148–239 (IEDLRNKILA…KNHEEEMNAL (92 aa)). Residues 240-262 (RGQVGGDVNVEMDAAPGVDLSRI) are linker 12. Positions 263 to 401 (LNEMRDQYEK…ATYRRLLEGE (139 aa)) are coil 2. The segment at 402 to 452 (DAHLATQYSSSLASQASREGTVTSRQVRTIVEEVQDGKVVSSREQVHRSTH) is tail.

Belongs to the intermediate filament family. As to quaternary structure, heterodimer of a type I and a type II keratin. Colocalizes with KRT8/KRT18 filament network.

It localises to the cytoplasm. The protein is Keratin, type I cytoskeletal 42 of Rattus norvegicus (Rat).